Reading from the N-terminus, the 451-residue chain is Enolase (451 aa).

Q163 contacts (2R)-2-phosphoglycerate. E205 acts as the Proton donor in catalysis. D258, E308, and D335 together coordinate Mg(2+). (2R)-2-phosphoglycerate is bound by residues K360, R389, S390, and K411. The active-site Proton acceptor is the K360.

This sequence belongs to the enolase family. The cofactor is Mg(2+).

It is found in the cytoplasm. The protein resides in the secreted. The protein localises to the cell surface. The enzyme catalyses (2R)-2-phosphoglycerate = phosphoenolpyruvate + H2O. The protein operates within carbohydrate degradation; glycolysis; pyruvate from D-glyceraldehyde 3-phosphate: step 4/5. In terms of biological role, catalyzes the reversible conversion of 2-phosphoglycerate (2-PG) into phosphoenolpyruvate (PEP). It is essential for the degradation of carbohydrates via glycolysis. The sequence is that of Enolase from Mycoplasma capricolum subsp. capricolum (strain California kid / ATCC 27343 / NCTC 10154).